The primary structure comprises 425 residues: Enolase (425 aa).

Residue Q170 coordinates (2R)-2-phosphoglycerate. E214 (proton donor) is an active-site residue. Positions 250, 291, and 317 each coordinate Mg(2+). (2R)-2-phosphoglycerate is bound by residues K342, R371, S372, and K393. K342 functions as the Proton acceptor in the catalytic mechanism.

The protein belongs to the enolase family. Mg(2+) is required as a cofactor.

The protein localises to the cytoplasm. Its subcellular location is the secreted. The protein resides in the cell surface. The enzyme catalyses (2R)-2-phosphoglycerate = phosphoenolpyruvate + H2O. It functions in the pathway carbohydrate degradation; glycolysis; pyruvate from D-glyceraldehyde 3-phosphate: step 4/5. In terms of biological role, catalyzes the reversible conversion of 2-phosphoglycerate (2-PG) into phosphoenolpyruvate (PEP). It is essential for the degradation of carbohydrates via glycolysis. This Methanococcoides burtonii (strain DSM 6242 / NBRC 107633 / OCM 468 / ACE-M) protein is Enolase.